A 118-amino-acid chain; its full sequence is MARIAGINIPDQKHTVIALTAIFGIGRTRARAICAATAIAETAKIKELSEAQIDILREEVAKYIVEGDLRREISMNIKRLMDLGCYRGLRHRRSLPLRGQRTKTNARTRKGPRKPIRK.

Positions Ser-94–Lys-118 are disordered.

It belongs to the universal ribosomal protein uS13 family. In terms of assembly, part of the 30S ribosomal subunit. Forms a loose heterodimer with protein S19. Forms two bridges to the 50S subunit in the 70S ribosome.

In terms of biological role, located at the top of the head of the 30S subunit, it contacts several helices of the 16S rRNA. In the 70S ribosome it contacts the 23S rRNA (bridge B1a) and protein L5 of the 50S subunit (bridge B1b), connecting the 2 subunits; these bridges are implicated in subunit movement. Contacts the tRNAs in the A and P-sites. The polypeptide is Small ribosomal subunit protein uS13 (Shewanella baltica (strain OS223)).